We begin with the raw amino-acid sequence, 1102 residues long: DNA-directed RNA polymerase subunit beta (1102 aa).

Residues 1076 to 1102 (IDSQRRAPNRPTYESLHTEEDLEEEEV) are disordered.

It belongs to the RNA polymerase beta chain family. As to quaternary structure, in cyanobacteria the RNAP catalytic core is composed of 2 alpha, 1 beta, 1 beta', 1 gamma and 1 omega subunit. When a sigma factor is associated with the core the holoenzyme is formed, which can initiate transcription.

The catalysed reaction is RNA(n) + a ribonucleoside 5'-triphosphate = RNA(n+1) + diphosphate. DNA-dependent RNA polymerase catalyzes the transcription of DNA into RNA using the four ribonucleoside triphosphates as substrates. In Synechocystis sp. (strain ATCC 27184 / PCC 6803 / Kazusa), this protein is DNA-directed RNA polymerase subunit beta.